Here is a 361-residue protein sequence, read N- to C-terminus: Phospho-N-acetylmuramoyl-pentapeptide-transferase (361 aa).

10 helical membrane-spanning segments follow: residues 28-48 (LAIIITLSISFVTGPILIKFL), 74-94 (TMGGIMIILSSCLSTLLLADL), 99-119 (IWITLFGFISFGIIGFMDDYA), 133-153 (SKFLLQGIISLIIYVLLEYLD), 168-188 (LSLDLNYFYMVFAIFVIVGSS), 203-223 (VPIAFTAGSFALISYLVGNLI), 236-256 (TGELTVLCAGLVGSCLGFLWF), 263-283 (VFMGDTGSLSLGGVLGIISVI), 288-308 (IVLAIIGGLFVIETTSVILQV), and 338-358 (KVVIRFWIISVIFSLIGLSSL).

It belongs to the glycosyltransferase 4 family. MraY subfamily. Mg(2+) is required as a cofactor.

Its subcellular location is the cell inner membrane. It carries out the reaction UDP-N-acetyl-alpha-D-muramoyl-L-alanyl-gamma-D-glutamyl-meso-2,6-diaminopimeloyl-D-alanyl-D-alanine + di-trans,octa-cis-undecaprenyl phosphate = di-trans,octa-cis-undecaprenyl diphospho-N-acetyl-alpha-D-muramoyl-L-alanyl-D-glutamyl-meso-2,6-diaminopimeloyl-D-alanyl-D-alanine + UMP. It participates in cell wall biogenesis; peptidoglycan biosynthesis. Functionally, catalyzes the initial step of the lipid cycle reactions in the biosynthesis of the cell wall peptidoglycan: transfers peptidoglycan precursor phospho-MurNAc-pentapeptide from UDP-MurNAc-pentapeptide onto the lipid carrier undecaprenyl phosphate, yielding undecaprenyl-pyrophosphoryl-MurNAc-pentapeptide, known as lipid I. In Rickettsia prowazekii (strain Madrid E), this protein is Phospho-N-acetylmuramoyl-pentapeptide-transferase.